Consider the following 630-residue polypeptide: MASLCSNSSSTSLKTPFTSSTTCLSSTPTASQLFLHGKRNKTFKVSCKVTNTNGNQDETNSVDRRNVLLGLGGLYGVANAIPLAASAAPTPPPDLSSCNKPKINATTEVPYFCCAPKPDDMSKVPYYKFPSVTKLRIRPPAHALDEAYIAKYNLAISRMKDLDKTQPDNPIGFKQQANIHCAYCNGGYSIDGKVLQVHNSWLFFPFHRWYLYFYERILGSLIDDPTFGLPFWNWDHPKGMRFPPMFDVPGTALYDERRGDQIHNGNGIDLGYFGDQVETTQLQLMTNNLTLMYRQLVTNSPCPLMSLVDLTLFGSTVEDAGTVENIPHSPVHIWVGTRRGSVLPVGKISNGEDMGNFYSAGLDPLFYCHHSNVDRMWNEWKATGGKRTDIQNKDWLNSEFFFYDENGNPFKVRVRDCLDTKKMGYDYHATATPWRNFKPKTKASAGKVNTGSIPPESQVFPLAKLDKAISFSINRPASSRTQQEKNAQEEVLTFNAIKYDNRDYIRFDVFLNVDNNVNANELDKAEFAGSYTSLPHVHRVGDPKHTATATLRLAITELLEDIGLEDEDTIAVTLVPKKGDISIGGVEIKLAIVKLVCVVNLLTLQLNKDRFCYDSVFVCWFVCLFFNFHV.

The interval 1-25 (MASLCSNSSSTSLKTPFTSSTTCLS) is disordered. Residues 1–87 (MASLCSNSSS…ANAIPLAASA (87 aa)) constitute a chloroplast transit peptide. Cystine bridges form between C98–C114 and C113–C181. Cu cation contacts are provided by H180, H198, H207, H328, H332, and H370. A cross-link (2'-(S-cysteinyl)-histidine (Cys-His)) is located at residues 184 to 198 (CNGGYSIDGKVLQVH).

This sequence belongs to the tyrosinase family. Requires Cu(2+) as cofactor.

It localises to the plastid. It is found in the chloroplast thylakoid lumen. The catalysed reaction is 2 catechol + O2 = 2 1,2-benzoquinone + 2 H2O. Catalyzes the oxidation of mono- and o-diphenols to o-diquinones. The chain is Polyphenol oxidase A, chloroplastic from Solanum lycopersicum (Tomato).